A 214-amino-acid chain; its full sequence is Vascular endothelial growth factor A (214 aa).

A signal peptide spans 1–26 (MNFLLSWVHWSLALLLYLHHAKWSQA). Intrachain disulfides connect Cys-51–Cys-93, Cys-82–Cys-127, and Cys-86–Cys-129. Residue Asn-100 is glycosylated (N-linked (GlcNAc...) asparagine). Over residues 131-142 (PKKDRARQEKKS) the composition is skewed to basic and acidic residues. The disordered stretch occupies residues 131 to 162 (PKKDRARQEKKSIRGKGKGQKRKRKKSRYKPW). Residues 143 to 159 (IRGKGKGQKRKRKKSRY) show a composition bias toward basic residues.

Belongs to the PDGF/VEGF growth factor family. As to quaternary structure, homodimer; disulfide-linked. Also found as heterodimer with PGF. Interacts with NRP1. Interacts with BSG. Interacts with CD82; this interaction inhibits VEGFA-mediated signaling pathway.

It is found in the secreted. Its function is as follows. Growth factor active in angiogenesis, vasculogenesis and endothelial cell growth. Induces endothelial cell proliferation, promotes cell migration, inhibits apoptosis and induces permeabilization of blood vessels. Binds to the FLT1/VEGFR1 and KDR/VEGFR2 receptors, heparan sulfate and heparin. Binding to NRP1 receptor initiates a signaling pathway needed for motor neuron axon guidance and cell body migration, including for the caudal migration of facial motor neurons from rhombomere 4 to rhombomere 6 during embryonic development. Also binds the DEAR/FBXW7-AS1 receptor. This Canis lupus familiaris (Dog) protein is Vascular endothelial growth factor A (VEGFA).